Reading from the N-terminus, the 66-residue chain is MPKLKTKSSVKKRFSVTATGKIKSTQSAKRHGMTKRSKRSIRVQRGTAIMNPSDSRIVKLFMPYSR.

The disordered stretch occupies residues Lys-21–Ser-40. The segment covering Ala-28–Ser-40 has biased composition (basic residues).

This sequence belongs to the bacterial ribosomal protein bL35 family.

The polypeptide is Large ribosomal subunit protein bL35 (Ehrlichia canis (strain Jake)).